We begin with the raw amino-acid sequence, 44 residues long: uncharacterized protein (44 aa).

Residues 19-39 (AVGFVVSFGFFAFLFVMATVI) form a helical membrane-spanning segment.

Its subcellular location is the cell membrane. This is an uncharacterized protein from Bacillus subtilis (strain 168).